We begin with the raw amino-acid sequence, 1011 residues long: Multiple C2 domain and transmembrane region protein 7 (1011 aa).

Positions 1 to 110 (MMMSNLKLGV…PHSDAVVLHF (110 aa)) constitute a C2 1 domain. Residues 178–195 (QEHQHQHPQGPNQSSSLA) show a composition bias toward polar residues. Residues 178-201 (QEHQHQHPQGPNQSSSLAAEQDNH) form a disordered region. C2 domains follow at residues 261–381 (IHKD…PQWY), 421–546 (VDCS…ARWY), and 587–709 (YSSD…THSY). 5 residues coordinate Ca(2+): Asp-294, Asp-300, Asp-347, Asp-349, and Asp-354. 3 helical membrane passes run 812-832 (MMTVFSGVIAVGKWFSDICSW), 846-866 (LMLVCLPELILPTMFLYMFLI), and 954-974 (IFVILCFIAAIVFFITPIQIV).

This sequence belongs to the MCTP family. Ca(2+) serves as cofactor. In terms of tissue distribution, accumulates specifically in hydathodes. Restricted the basal meristem of roots. Observed in flowers.

It is found in the membrane. Its subcellular location is the vesicle. The protein localises to the endosome membrane. Functionally, may function as a signaling molecule by regulating the trafficking of other regulators. This is Multiple C2 domain and transmembrane region protein 7 from Arabidopsis thaliana (Mouse-ear cress).